The following is a 354-amino-acid chain: Uroporphyrinogen decarboxylase (354 aa).

Substrate contacts are provided by residues 27–31 (RQAGR), Asp-77, Tyr-154, Ser-209, and His-327.

The protein belongs to the uroporphyrinogen decarboxylase family. In terms of assembly, homodimer.

The protein localises to the cytoplasm. The catalysed reaction is uroporphyrinogen III + 4 H(+) = coproporphyrinogen III + 4 CO2. It functions in the pathway porphyrin-containing compound metabolism; protoporphyrin-IX biosynthesis; coproporphyrinogen-III from 5-aminolevulinate: step 4/4. In terms of biological role, catalyzes the decarboxylation of four acetate groups of uroporphyrinogen-III to yield coproporphyrinogen-III. This is Uroporphyrinogen decarboxylase from Pseudoalteromonas translucida (strain TAC 125).